A 567-amino-acid chain; its full sequence is Protein phosphatase 1 regulatory inhibitor subunit 16B (567 aa).

Residues 15 to 55 (EKVPTLERLRAAQKRRAQQLKKWAQYEQDLQHRKRKHERKR) adopt a coiled-coil conformation. Ser-69 carries the post-translational modification Phosphoserine. 4 ANK repeats span residues 100-129 (DGLTALHQCCIDNFEEIVKLLLSHGANVNA), 133-162 (ELWTPLHAAATCGHINLVKILVQYGADLLA), 228-257 (QGATLLHIAGANGYLRAAELLLDHGVRVDV), and 261-290 (DGWEPLHAAAFWGQMQMAELLVSHGASLSA). Phosphoserine is present on residues Ser-333, Ser-337, and Ser-350. A disordered region spans residues 378 to 403 (RTSTYNGDIRETRTDQENKDPNPRLE). The segment covering 385–403 (DIRETRTDQENKDPNPRLE) has biased composition (basic and acidic residues). Position 476 is a phosphoserine (Ser-476). A compositionally biased stretch (polar residues) spans 504–515 (SSMARTGESSSE). Positions 504-525 (SSMARTGESSSEGKAPLIGGRT) are disordered. One copy of the ANK 5 repeat lies at 530–559 (SNGTSVYYTVTSGDPPLLKFKAPIEEMEEK). Cys-563 is lipidated: S-palmitoyl cysteine. The residue at position 564 (Cys-564) is a Cysteine methyl ester. Cys-564 carries S-farnesyl cysteine lipidation. Residues 565–567 (RIS) constitute a propeptide, removed in mature form.

Interacts with PPP1CA, PPP1CB and MSN. Interacts (via its fourth ankyrin repeat) with the mature dimeric form of RPSA/LAMR1. Interacts with EEF1A1. Interacts with PTEN. Interacts with ECE1. Post-translationally, phosphorylated by PKA and, after PKA priming, by GSK3B. Phosphorylation by GSK3B reduces its association with PP1C and enhances PP1C activity. Dephosphorylation by its associated PP1C results in enhanced association with PP1C, but reduced PP1C activity.

It is found in the cell membrane. The protein localises to the nucleus. The protein resides in the cell projection. Functionally, regulator of protein phosphatase 1 (PP1) that acts as a positive regulator of pulmonary endothelial cell (EC) barrier function. Involved in the regulation of the PI3K/AKT signaling pathway, angiogenesis and endothelial cell proliferation. Regulates angiogenesis and endothelial cell proliferation through the control of ECE1 dephosphorylation, trafficking and activity. Protects the endothelial barrier from lipopolysaccharide (LPS)-induced vascular leakage. Involved in the regulation of endothelial cell filopodia extension. May be a downstream target for TGF-beta1 signaling cascade in endothelial cells. Involved in PKA-mediated moesin dephosphorylation which is important in EC barrier protection against thrombin stimulation. Promotes the interaction of PPP1CA with RPSA/LAMR1 and in turn facilitates the dephosphorylation of RPSA/LAMR1. Involved in the dephosphorylation of EEF1A1. This is Protein phosphatase 1 regulatory inhibitor subunit 16B (PPP1R16B) from Homo sapiens (Human).